Consider the following 332-residue polypeptide: Glycerol-3-phosphate dehydrogenase [NAD(P)+] (332 aa).

Tryptophan 13, arginine 33, and lysine 107 together coordinate NADPH. Sn-glycerol 3-phosphate is bound by residues lysine 107, glycine 136, and serine 138. Alanine 140 provides a ligand contact to NADPH. Positions 191, 244, 254, 255, and 256 each coordinate sn-glycerol 3-phosphate. The active-site Proton acceptor is lysine 191. Arginine 255 is a binding site for NADPH. Glutamate 280 contacts NADPH.

The protein belongs to the NAD-dependent glycerol-3-phosphate dehydrogenase family.

The protein resides in the cytoplasm. The catalysed reaction is sn-glycerol 3-phosphate + NAD(+) = dihydroxyacetone phosphate + NADH + H(+). It carries out the reaction sn-glycerol 3-phosphate + NADP(+) = dihydroxyacetone phosphate + NADPH + H(+). It participates in membrane lipid metabolism; glycerophospholipid metabolism. Functionally, catalyzes the reduction of the glycolytic intermediate dihydroxyacetone phosphate (DHAP) to sn-glycerol 3-phosphate (G3P), the key precursor for phospholipid synthesis. This is Glycerol-3-phosphate dehydrogenase [NAD(P)+] from Alkalilimnicola ehrlichii (strain ATCC BAA-1101 / DSM 17681 / MLHE-1).